The following is a 1438-amino-acid chain: DNA polymerase III PolC-type (1438 aa).

The region spanning 422–578 (YVVFDVETTG…YDTEATAYIF (157 aa)) is the Exonuclease domain.

The protein belongs to the DNA polymerase type-C family. PolC subfamily.

Its subcellular location is the cytoplasm. It carries out the reaction DNA(n) + a 2'-deoxyribonucleoside 5'-triphosphate = DNA(n+1) + diphosphate. Its function is as follows. Required for replicative DNA synthesis. This DNA polymerase also exhibits 3' to 5' exonuclease activity. This is DNA polymerase III PolC-type from Staphylococcus epidermidis (strain ATCC 35984 / DSM 28319 / BCRC 17069 / CCUG 31568 / BM 3577 / RP62A).